The following is a 93-amino-acid chain: Small ribosomal subunit protein uS19 (93 aa).

Belongs to the universal ribosomal protein uS19 family.

Protein S19 forms a complex with S13 that binds strongly to the 16S ribosomal RNA. This is Small ribosomal subunit protein uS19 from Oleidesulfovibrio alaskensis (strain ATCC BAA-1058 / DSM 17464 / G20) (Desulfovibrio alaskensis).